A 352-amino-acid polypeptide reads, in one-letter code: UDP-N-acetylglucosamine--N-acetylmuramyl-(pentapeptide) pyrophosphoryl-undecaprenol N-acetylglucosamine transferase (352 aa).

UDP-N-acetyl-alpha-D-glucosamine is bound by residues 13–15 (TGG), Asn125, Arg161, Ser189, Ile242, 261–266 (ALTVSE), and Gln286.

It belongs to the glycosyltransferase 28 family. MurG subfamily.

Its subcellular location is the cell inner membrane. The catalysed reaction is di-trans,octa-cis-undecaprenyl diphospho-N-acetyl-alpha-D-muramoyl-L-alanyl-D-glutamyl-meso-2,6-diaminopimeloyl-D-alanyl-D-alanine + UDP-N-acetyl-alpha-D-glucosamine = di-trans,octa-cis-undecaprenyl diphospho-[N-acetyl-alpha-D-glucosaminyl-(1-&gt;4)]-N-acetyl-alpha-D-muramoyl-L-alanyl-D-glutamyl-meso-2,6-diaminopimeloyl-D-alanyl-D-alanine + UDP + H(+). It functions in the pathway cell wall biogenesis; peptidoglycan biosynthesis. Its function is as follows. Cell wall formation. Catalyzes the transfer of a GlcNAc subunit on undecaprenyl-pyrophosphoryl-MurNAc-pentapeptide (lipid intermediate I) to form undecaprenyl-pyrophosphoryl-MurNAc-(pentapeptide)GlcNAc (lipid intermediate II). This Erwinia tasmaniensis (strain DSM 17950 / CFBP 7177 / CIP 109463 / NCPPB 4357 / Et1/99) protein is UDP-N-acetylglucosamine--N-acetylmuramyl-(pentapeptide) pyrophosphoryl-undecaprenol N-acetylglucosamine transferase.